A 211-amino-acid polypeptide reads, in one-letter code: Probable GTP-binding protein EngB (211 aa).

The EngB-type G domain occupies 30–204 (EGFEVAFAGR…YTVLAGWMEL (175 aa)). Residues 38 to 45 (GRSNAGKS), 64 to 68 (GRTQL), 82 to 85 (DLPG), 149 to 152 (TKAD), and 182 to 185 (LFSA) each bind GTP. Mg(2+) is bound by residues S45 and T66.

This sequence belongs to the TRAFAC class TrmE-Era-EngA-EngB-Septin-like GTPase superfamily. EngB GTPase family. It depends on Mg(2+) as a cofactor.

Its function is as follows. Necessary for normal cell division and for the maintenance of normal septation. This is Probable GTP-binding protein EngB from Pseudomonas syringae pv. tomato (strain ATCC BAA-871 / DC3000).